The following is a 188-amino-acid chain: RWD domain-containing protein 4 (188 aa).

The RWD domain maps to 9–111 (MELEALRSIY…EYAKDHKEQF (103 aa)). Positions 132-167 (TPTTAPSSKKKEKKEQLSKAQKRKLADKTDHKGELP) are disordered. The segment covering 155 to 166 (KLADKTDHKGEL) has biased composition (basic and acidic residues).

The sequence is that of RWD domain-containing protein 4 (Rwdd4) from Mus musculus (Mouse).